The following is a 487-amino-acid chain: METVQLRNPPRRQLKKLDEDSLTKQPEEVFDVLEKLGEGSYGSVYKAIHKETGQIVAIKQVPVESDLQEIIKEISIMQQCDSPHVVKYYGSYFKNTDLWIVMEYCGAGSVSDIIRLRNKTLTEDEIATILQSTLKGLEYLHFMRKIHRDIKAGNILLNTEGHAKLADFGVAGQLTDTMAKRNTVIGTPFWMAPEVIQEIGYNCVADIWSLGITAIEMAEGKPPYADIHPMRAIFMIPTNPPPTFRKPELWSDNFMDFVKQCLVKSPEQRATATQLLQHPFVKSAKGVSILRDLINEAMDVKLKRQEAQQREVDQDDEENSEEDEMDSGTMVRAAGDEMGTVRVASTMSGGANTMIEHGDTLPSQLGTMVINTEDEEEEGTMKRRDETMQPAKPSFLEYFEQKEKENQINSFGKNVSGSLKNSSDWKIPQDGDYEFLKSWTVEDLQKRLLALDPMMEQEMEEIRQKYRSKRQPILDAIEAKKRRQQNF.

Met-1 is subject to N-acetylmethionine. Thr-3 carries the post-translational modification Phosphothreonine. The region spanning 30–281 is the Protein kinase domain; sequence FDVLEKLGEG…ATQLLQHPFV (252 aa). Residues 36-44 and Lys-59 contribute to the ATP site; that span reads LGEGSYGSV. The Proton acceptor role is filled by Asp-149. Phosphothreonine; by autocatalysis is present on Thr-183. A Phosphoserine modification is found at Ser-265. The stretch at 289–311 forms a coiled coil; that stretch reads ILRDLINEAMDVKLKRQEAQQRE. Residues 305 to 334 are disordered; it reads QEAQQREVDQDDEENSEEDEMDSGTMVRAA. Positions 313-326 are enriched in acidic residues; sequence DQDDEENSEEDEMD. At Ser-320 the chain carries Phosphoserine. 2 positions are modified to phosphothreonine: Thr-340 and Thr-367. At Thr-387 the chain carries Phosphothreonine; by PKB/AKT1. Ser-410 carries the phosphoserine modification. Tyr-433 is modified (phosphotyrosine). The region spanning 433–480 is the SARAH domain; that stretch reads YEFLKSWTVEDLQKRLLALDPMMEQEMEEIRQKYRSKRQPILDAIEAK.

The protein belongs to the protein kinase superfamily. STE Ser/Thr protein kinase family. STE20 subfamily. Homodimer; mediated via the coiled-coil region. Interacts with NORE1, which inhibits autoactivation. Interacts with and stabilizes SAV1. Interacts with RASSF1. Interacts with FOXO3. Interacts with RASSF2 (via SARAH domain). Interacts with AR, PKB/AKT1, TNNI3 and SIRT1. Interacts with MARK3 and SCRIB in the presence of DLG5. Interacts with DLG5 (via PDZ domain 3). Requires Mg(2+) as cofactor. In terms of processing, autophosphorylated on serine and threonine residues. Phosphorylation at Thr-387 by PKB/AKT1, leads to inhibition of its: kinase activity, nuclear translocation and autophosphorylation at Thr-183. It also diminishes its cleavage by caspases and its ability to phosphorylate FOXO3. Proteolytically cleaved by caspase-3 during apoptosis at Asp-326 resulting in a 37 kDa form. Proteolytic cleavage results in kinase activation and nuclear translocation of the truncated form (MST1/N).

Its subcellular location is the cytoplasm. It localises to the nucleus. The catalysed reaction is L-seryl-[protein] + ATP = O-phospho-L-seryl-[protein] + ADP + H(+). It catalyses the reaction L-threonyl-[protein] + ATP = O-phospho-L-threonyl-[protein] + ADP + H(+). Inhibited by the C-terminal non-catalytic region. Activated by caspase-cleavage. Full activation also requires homodimerization and autophosphorylation of Thr-183. Activated by RASSF1 which acts by preventing its dephosphorylation. Functionally, stress-activated, pro-apoptotic kinase which, following caspase-cleavage, enters the nucleus and induces chromatin condensation followed by internucleosomal DNA fragmentation. Key component of the Hippo signaling pathway which plays a pivotal role in organ size control and tumor suppression by restricting proliferation and promoting apoptosis. The core of this pathway is composed of a kinase cascade wherein STK3/MST2 and STK4/MST1, in complex with its regulatory protein SAV1, phosphorylates and activates LATS1/2 in complex with its regulatory protein MOB1, which in turn phosphorylates and inactivates YAP1 oncoprotein and WWTR1/TAZ. Phosphorylation of YAP1 by LATS2 inhibits its translocation into the nucleus to regulate cellular genes important for cell proliferation, cell death, and cell migration. STK3/MST2 and STK4/MST1 are required to repress proliferation of mature hepatocytes, to prevent activation of facultative adult liver stem cells (oval cells), and to inhibit tumor formation. Phosphorylates 'Ser-14' of histone H2B (H2BS14ph) during apoptosis. Phosphorylates FOXO3 upon oxidative stress, which results in its nuclear translocation and cell death initiation. Phosphorylates MOBKL1A, MOBKL1B and RASSF2. Phosphorylates TNNI3 (cardiac Tn-I) and alters its binding affinity to TNNC1 (cardiac Tn-C) and TNNT2 (cardiac Tn-T). Phosphorylates FOXO1 on 'Ser-212' and regulates its activation and stimulates transcription of PMAIP1 in a FOXO1-dependent manner. Phosphorylates SIRT1 and inhibits SIRT1-mediated p53/TP53 deacetylation, thereby promoting p53/TP53 dependent transcription and apoptosis upon DNA damage. Acts as an inhibitor of PKB/AKT1. Phosphorylates AR on 'Ser-650' and suppresses its activity by intersecting with PKB/AKT1 signaling and antagonizing formation of AR-chromatin complexes. The protein is Serine/threonine-protein kinase 4 (Stk4) of Mus musculus (Mouse).